The primary structure comprises 242 residues: Probable transcriptional regulatory protein XCC3027 (242 aa).

This sequence belongs to the TACO1 family.

It is found in the cytoplasm. The sequence is that of Probable transcriptional regulatory protein XCC3027 from Xanthomonas campestris pv. campestris (strain ATCC 33913 / DSM 3586 / NCPPB 528 / LMG 568 / P 25).